Here is a 175-residue protein sequence, read N- to C-terminus: Glutamyl-tRNA(Gln) amidotransferase subunit C, mitochondrial (175 aa).

This sequence belongs to the GatC family. Subunit of the heterotrimeric GatCAB amidotransferase (AdT) complex, composed of A, B and C subunits.

Its subcellular location is the mitochondrion. The enzyme catalyses L-glutamyl-tRNA(Gln) + L-glutamine + ATP + H2O = L-glutaminyl-tRNA(Gln) + L-glutamate + ADP + phosphate + H(+). Allows the formation of correctly charged Gln-tRNA(Gln) through the transamidation of misacylated Glu-tRNA(Gln) in the mitochondria. The reaction takes place in the presence of glutamine and ATP through an activated gamma-phospho-Glu-tRNA(Gln). The protein is Glutamyl-tRNA(Gln) amidotransferase subunit C, mitochondrial of Caenorhabditis elegans.